The chain runs to 203 residues: Thymidylate kinase (203 aa).

ATP is bound at residue 7–14 (GGEGAGKT).

The protein belongs to the thymidylate kinase family.

It catalyses the reaction dTMP + ATP = dTDP + ADP. Functionally, phosphorylation of dTMP to form dTDP in both de novo and salvage pathways of dTTP synthesis. In Chlamydia muridarum (strain MoPn / Nigg), this protein is Thymidylate kinase (tmk).